We begin with the raw amino-acid sequence, 294 residues long: Cytidine deaminase (294 aa).

2 CMP/dCMP-type deaminase domains span residues 48–168 (DEDA…FGPK) and 186–294 (LTGN…VLLG). 89–91 (NME) contacts substrate. H102 provides a ligand contact to Zn(2+). The active-site Proton donor is the E104. Residues C129 and C132 each coordinate Zn(2+).

Belongs to the cytidine and deoxycytidylate deaminase family. Homodimer. Zn(2+) serves as cofactor.

It carries out the reaction cytidine + H2O + H(+) = uridine + NH4(+). The enzyme catalyses 2'-deoxycytidine + H2O + H(+) = 2'-deoxyuridine + NH4(+). This enzyme scavenges exogenous and endogenous cytidine and 2'-deoxycytidine for UMP synthesis. The polypeptide is Cytidine deaminase (Salmonella typhi).